The chain runs to 286 residues: Release factor glutamine methyltransferase (286 aa).

S-adenosyl-L-methionine is bound by residues 120–124 (GTGSG), aspartate 143, tryptophan 172, and asparagine 187. A substrate-binding site is contributed by 187-190 (NPPY).

Belongs to the protein N5-glutamine methyltransferase family. PrmC subfamily.

The enzyme catalyses L-glutaminyl-[peptide chain release factor] + S-adenosyl-L-methionine = N(5)-methyl-L-glutaminyl-[peptide chain release factor] + S-adenosyl-L-homocysteine + H(+). Its function is as follows. Methylates the class 1 translation termination release factors RF1/PrfA and RF2/PrfB on the glutamine residue of the universally conserved GGQ motif. The protein is Release factor glutamine methyltransferase of Gloeobacter violaceus (strain ATCC 29082 / PCC 7421).